A 718-amino-acid polypeptide reads, in one-letter code: Polyribonucleotide nucleotidyltransferase (718 aa).

2 residues coordinate Mg(2+): aspartate 493 and aspartate 499. The 60-residue stretch at 560 to 619 folds into the KH domain; it reads PRMITIKINPEKIRDVIGKGGSVIRALTEETGTTIDISDDGVVTIASTSSEGMAEAKKRI. Residues 629–697 form the S1 motif domain; it reads GQVYEGTVLK…EKGRVRLSAK (69 aa).

It belongs to the polyribonucleotide nucleotidyltransferase family. Requires Mg(2+) as cofactor.

The protein resides in the cytoplasm. The catalysed reaction is RNA(n+1) + phosphate = RNA(n) + a ribonucleoside 5'-diphosphate. In terms of biological role, involved in mRNA degradation. Catalyzes the phosphorolysis of single-stranded polyribonucleotides processively in the 3'- to 5'-direction. The polypeptide is Polyribonucleotide nucleotidyltransferase (Paraburkholderia phytofirmans (strain DSM 17436 / LMG 22146 / PsJN) (Burkholderia phytofirmans)).